The following is a 226-amino-acid chain: Cytidylate kinase (226 aa).

10-18 (GPASSGKST) contacts ATP.

This sequence belongs to the cytidylate kinase family. Type 1 subfamily.

The protein localises to the cytoplasm. The catalysed reaction is CMP + ATP = CDP + ADP. The enzyme catalyses dCMP + ATP = dCDP + ADP. The protein is Cytidylate kinase of Streptococcus thermophilus (strain ATCC BAA-491 / LMD-9).